The primary structure comprises 1308 residues: Cilia- and flagella-associated protein 57 C (1308 aa).

7 WD repeats span residues 57–99 (NEYR…RRKN), 110–154 (YNIK…KCLG), 415–454 (NHTGPINSMDICKRKPIIATCSTDKTIKIWDYEKKQIKIS), 504–546 (SPFK…NPSQ), 551–590 (GHTGRVKCIAWSSDDSFLLSCGLDGMILAWKLDQDFQHQQ), 645–689 (LLDI…GKFT), and 694–733 (HDERGVEKMKITNDDRYIITAGKDGCIMVFEIKDKDARGM). Residues 779-1000 (LNSRDDRIRQ…RDKIDGQKKI (222 aa)) are a coiled coil.

The protein belongs to the CFAP57 family. As to quaternary structure, forms a heterodimer with CFAP57A. Associates with components of the nexin-dynein regulatory complex (N-DRC) and the CFAP184:CFAP263 complex.

It localises to the cell projection. Its subcellular location is the cilium. Associates with components of the nexin-dynein regulatory complex (N-DRC), a key regulator of ciliary/flagellar motility, and might act as an inner dynein arm (IDA) hub or linkage. In Tetrahymena thermophila (strain SB210), this protein is Cilia- and flagella-associated protein 57 C (CFAP57C).